The sequence spans 76 residues: MSSIFDKVKAIVVEQLGVDEEEVTMETSFEDLNADSLDIVELVMALEEEFDIEIPDEDAEKIKTIGSAVEYIKENQ.

The Carrier domain occupies 2 to 76 (SSIFDKVKAI…SAVEYIKENQ (75 aa)). An O-(pantetheine 4'-phosphoryl)serine modification is found at S36.

The protein belongs to the acyl carrier protein (ACP) family. 4'-phosphopantetheine is transferred from CoA to a specific serine of apo-ACP by AcpS. This modification is essential for activity because fatty acids are bound in thioester linkage to the sulfhydryl of the prosthetic group.

It localises to the cytoplasm. It participates in lipid metabolism; fatty acid biosynthesis. In terms of biological role, carrier of the growing fatty acid chain in fatty acid biosynthesis. In Heliobacterium modesticaldum (strain ATCC 51547 / Ice1), this protein is Acyl carrier protein.